The sequence spans 480 residues: UDP-glycosyltransferase 71C5 (480 aa).

UDP-alpha-D-glucose-binding positions include S290, 349–351 (APQ), 366–374 (HCGWNSVQE), and 388–391 (YAEQ).

It belongs to the UDP-glycosyltransferase family.

Its function is as follows. Possesses low quercetin 3-O-glucosyltransferase activity in vitro. This Arabidopsis thaliana (Mouse-ear cress) protein is UDP-glycosyltransferase 71C5 (UGT71C5).